We begin with the raw amino-acid sequence, 348 residues long: S-adenosylmethionine:tRNA ribosyltransferase-isomerase (348 aa).

It belongs to the QueA family. In terms of assembly, monomer.

The protein localises to the cytoplasm. It catalyses the reaction 7-aminomethyl-7-carbaguanosine(34) in tRNA + S-adenosyl-L-methionine = epoxyqueuosine(34) in tRNA + adenine + L-methionine + 2 H(+). It participates in tRNA modification; tRNA-queuosine biosynthesis. Functionally, transfers and isomerizes the ribose moiety from AdoMet to the 7-aminomethyl group of 7-deazaguanine (preQ1-tRNA) to give epoxyqueuosine (oQ-tRNA). The chain is S-adenosylmethionine:tRNA ribosyltransferase-isomerase from Cytophaga hutchinsonii (strain ATCC 33406 / DSM 1761 / CIP 103989 / NBRC 15051 / NCIMB 9469 / D465).